Reading from the N-terminus, the 154-residue chain is Snaclec lebecin subunit beta (154 aa).

The signal sequence occupies residues 1–23; that stretch reads MGRIIFVSFGLLVVFLSLSGTGA. Disulfide bonds link Cys-25/Cys-36, Cys-53/Cys-150, and Cys-125/Cys-142. One can recognise a C-type lectin domain in the interval 32–151; the sequence is DEEHCYYVFF…CGDDYPFVCK (120 aa). An N-linked (GlcNAc...) asparagine glycan is attached at Asn-139.

As to quaternary structure, heterodimer with the alpha subunit (AC W5XDM0); disulfide-linked. In terms of tissue distribution, expressed by the venom gland.

Its subcellular location is the secreted. Inhibits human breast cancer cells (MDA-MB231) migration and proliferation, as well as their adhesion to fibrinogen and fibronectin. This inhibition may be due to the binding to receptors of the integrin family, probably alpha-v/beta-3 (ITGAV/ITGB3) (40% inhibition of cell adhesion) and alpha-5/beta-1 (ITGA5/ITGB1) (by comparison with lebectin). The sequence is that of Snaclec lebecin subunit beta from Macrovipera lebetinus (Levantine viper).